Here is a 186-residue protein sequence, read N- to C-terminus: Peptidyl-tRNA hydrolase (186 aa).

Residue Y16 coordinates tRNA. Residue H21 is the Proton acceptor of the active site. Positions 66, 68, and 114 each coordinate tRNA.

The protein belongs to the PTH family. Monomer.

The protein resides in the cytoplasm. The enzyme catalyses an N-acyl-L-alpha-aminoacyl-tRNA + H2O = an N-acyl-L-amino acid + a tRNA + H(+). Functionally, hydrolyzes ribosome-free peptidyl-tRNAs (with 1 or more amino acids incorporated), which drop off the ribosome during protein synthesis, or as a result of ribosome stalling. In terms of biological role, catalyzes the release of premature peptidyl moieties from peptidyl-tRNA molecules trapped in stalled 50S ribosomal subunits, and thus maintains levels of free tRNAs and 50S ribosomes. The chain is Peptidyl-tRNA hydrolase from Ureaplasma parvum serovar 3 (strain ATCC 700970).